The primary structure comprises 982 residues: MAPPMNLQQWLLWKKMNETHLALENISSLTEEQKQQVIIEIQQEEVIPTRMDRVKYLAYACCATSTRVMCWLFLICVLLIIVFVSCFVTVARIQWNRDINVFGPVIDWNVTHQATYQQLKAARLTRSLKVEHPHISYISINMSSIPQGVMYTPHPEPIILKERVLGISQVLMINSENIANVANLSQETKVLLTDMINEELQDLSNQMIDFELPLGDPRDQDQYIHHKCYQEFAHCYLVKYKKPSPWISEGIIVDQCPLPRIHDPNYYKYQPIWDYYLKIQNIRPQGWTSKSYYGTARMGSFYIPTFLRNNTVSHVLFCSDQLYGKWYNIENNIQENEQLLKTKLYNLTTYSKLKARALPKEWNNQGNARLFRSFNPLDVCNRPEAVLLLNTTYFTYSLWEGDCNYTTALIQNLTECRQPDRLKLKHPYACRFWRYKEGQEEVKCLGNEKKKCLYYSEYSSPEAQFDFGFLSYLNAFPGLKYIENQTVREPEYEVYSLYMECMNSAEKYGIDSVLFALKTFLNFTGTPVNEMSTARAFVGLTDPKFPPTYPNITKEQKRCNNLKRRKRSTNIEKLRSMGYSLTGAVQTLSQISDINDERLQQGVSLLRDHVVTLMEAALHDITIMEGMLAIQHVHTHLNHLKTILLMRKIDWTFIKSNWIKEQLQKTEDEMKIIRRTAKSLVYYVTQTSSSTTATSWEIGIYYEITIPKHIYLNNWQVINIGHLVESAGHLTLIRVKHPYEVINKECTYEQYLHLEDCISQDYVICDTVQIVSPCGNSTTTSDCPVTAEKVKEPYVQVSALKNGSYLVLTSRTDCSIPAYVPSIVTVNETVKCFGVEFHKPLYSESKVSFEPQVPHLKLRLPHLVGIIANLQNLEIEVTSTQESIKDQIERAKSQLLRLDIHEGDFPAWIQQLASATRDVWPAAARALQGIGNVLSNTAQGIFGTTVSILSYAKPILIGIGVILLIAFLFKIVSWLPGKKKRN.

Residues methionine 1–lysine 15 are involved in virion budding. The Cytoplasmic portion of the chain corresponds to methionine 1–serine 65. Glycyl lysine isopeptide (Lys-Gly) (interchain with G-Cter in ubiquitin) cross-links involve residues lysine 14, lysine 15, and lysine 34. A helical; Signal-anchor for type III membrane protein membrane pass occupies residues threonine 66 to valine 88. At threonine 89–proline 954 the chain is on the lumenal side. N-linked (GlcNAc...) asparagine; by host glycosylation is found at asparagine 109, asparagine 141, asparagine 183, asparagine 309, asparagine 346, asparagine 390, asparagine 404, asparagine 412, asparagine 484, asparagine 522, and asparagine 551. The segment at asparagine 570–serine 592 is fusion peptide. Residues asparagine 776, asparagine 802, and asparagine 827 are each glycosylated (N-linked (GlcNAc...) asparagine; by host). Residues isoleucine 955–leucine 975 traverse the membrane as a helical segment. Topologically, residues proline 976 to asparagine 982 are cytoplasmic. The short motif at lysine 978 to lysine 980 is the Endoplasmic reticulum retention signal element.

In terms of assembly, the mature envelope protein consists of a trimer of SU-TM heterodimers. The N-terminus of leader peptide specifically interacts with Gag protein. This specific interaction between Gag protein and Env glycoprotein may allow particle egress. In terms of processing, envelope glycoproteins are synthesized as an inactive precursor that is processed by host furin or a furin-like protease to yield a functional hetero-oligomeric complex. The transmembrane protein and the surface protein are N-glycosylated. Post-translationally, mono- and polyubiquitinated leader peptide are found in viral particles. Ubiquitination may be involved in regulating the balance between viral and subviral particles release.

Its subcellular location is the host endoplasmic reticulum membrane. It localises to the virion membrane. The surface protein (SU) attaches the virus to the host cell by binding to the cell receptor. This interaction triggers the refolding of TM and is thought to activate its fusogenic potential by unmasking its fusion peptide. Its function is as follows. The transmembrane protein (TM) acts as a class I viral fusion protein. Under the current model, the protein has at least 3 conformational states: pre-fusion native state, pre-hairpin intermediate state, and post-fusion hairpin state. During viral and target cell membrane fusion, the coiled coil regions (heptad repeats) assume a trimer-of-hairpins structure, positioning the fusion peptide in close proximity to the C-terminal region of the ectodomain. The formation of this structure appears to drive apposition and subsequent fusion of viral and target cell membranes. Membranes fusion leads to delivery of the nucleocapsid into the cytoplasm. In terms of biological role, the leader peptide is a component of released, infectious virions and is required for particle budding. In Simian foamy virus type 3 (strain LK3) (SFVagm), this protein is Envelope glycoprotein gp130 (env).